A 529-amino-acid polypeptide reads, in one-letter code: UDP-glucuronosyltransferase 2B23 (529 aa).

The signal sequence occupies residues 1 to 24 (MSVKWTSVILLIQLSFYFSSGSCG). N-linked (GlcNAc...) asparagine glycans are attached at residues Asn67 and Asn68. Residues 494–514 (IGFLLACVATVIFIIMKCCLF) form a helical membrane-spanning segment.

The protein belongs to the UDP-glycosyltransferase family. Expressed in several tissues, including the prostate, mammary gland, epididymis, testis and ovary.

The protein resides in the microsome membrane. It is found in the endoplasmic reticulum membrane. It carries out the reaction glucuronate acceptor + UDP-alpha-D-glucuronate = acceptor beta-D-glucuronoside + UDP + H(+). In terms of biological role, UDPGTs are of major importance in the conjugation and subsequent elimination of potentially toxic xenobiotics and endogenous compounds. This isozyme has glucuronidating capacity on 6 steroids and the bile acid, hyodeoxycholic acid. May potentially play an important role in estrogen and androgen catabolism in peripheral steroid target tissues. This Macaca fascicularis (Crab-eating macaque) protein is UDP-glucuronosyltransferase 2B23 (UGT2B23).